Consider the following 265-residue polypeptide: Nitrogenase iron protein 2 (265 aa).

8-15 (GKGGIGKS) contacts ATP. Cys91 is a [4Fe-4S] cluster binding site. ADP-ribosylarginine; by dinitrogenase reductase ADP-ribosyltransferase is present on Arg94. Residue Cys126 participates in [4Fe-4S] cluster binding.

Belongs to the NifH/BchL/ChlL family. As to quaternary structure, homodimer. The cofactor is [4Fe-4S] cluster. In terms of processing, the reversible ADP-ribosylation of Arg-94 inactivates the nitrogenase reductase and regulates nitrogenase activity.

It catalyses the reaction N2 + 8 reduced [2Fe-2S]-[ferredoxin] + 16 ATP + 16 H2O = H2 + 8 oxidized [2Fe-2S]-[ferredoxin] + 2 NH4(+) + 16 ADP + 16 phosphate + 6 H(+). Its function is as follows. The key enzymatic reactions in nitrogen fixation are catalyzed by the nitrogenase complex, which has 2 components: the iron protein and the molybdenum-iron protein. The polypeptide is Nitrogenase iron protein 2 (nifH2) (Methanothermobacter thermautotrophicus (strain ATCC 29096 / DSM 1053 / JCM 10044 / NBRC 100330 / Delta H) (Methanobacterium thermoautotrophicum)).